We begin with the raw amino-acid sequence, 252 residues long: Endonuclease NucS (252 aa).

It belongs to the NucS endonuclease family.

It localises to the cytoplasm. Functionally, cleaves both 3' and 5' ssDNA extremities of branched DNA structures. The sequence is that of Endonuclease NucS from Sulfurisphaera tokodaii (strain DSM 16993 / JCM 10545 / NBRC 100140 / 7) (Sulfolobus tokodaii).